Reading from the N-terminus, the 123-residue chain is uncharacterized protein (123 aa).

The segment at 100–123 (NKQPKTTHHFSTNSSEYKSRKSKH) is disordered.

This is an uncharacterized protein from Acanthamoeba polyphaga mimivirus (APMV).